The chain runs to 234 residues: Elongation factor Tu, chloroplastic (234 aa).

The 125-residue stretch at 1–125 (KNMITGAAQM…KVDSYIPTPE (125 aa)) folds into the tr-type G domain. 47-50 (NKQD) contributes to the GTP binding site.

It belongs to the TRAFAC class translation factor GTPase superfamily. Classic translation factor GTPase family. EF-Tu/EF-1A subfamily.

It is found in the plastid. The protein localises to the chloroplast. It catalyses the reaction GTP + H2O = GDP + phosphate + H(+). In terms of biological role, GTP hydrolase that promotes the GTP-dependent binding of aminoacyl-tRNA to the A-site of ribosomes during protein biosynthesis. The polypeptide is Elongation factor Tu, chloroplastic (tufA) (Pandorina morum (Freshwater green alga)).